Consider the following 66-residue polypeptide: Large ribosomal subunit protein bL35 (66 aa).

Basic residues predominate over residues 1-26 (MPKMKTHRGSAKRFKKTGSGKLKRSH). Positions 1 to 45 (MPKMKTHRGSAKRFKKTGSGKLKRSHAYTSHLFANKSQKQKRKLR) are disordered.

This sequence belongs to the bacterial ribosomal protein bL35 family.

The sequence is that of Large ribosomal subunit protein bL35 from Bacillus velezensis (strain DSM 23117 / BGSC 10A6 / LMG 26770 / FZB42) (Bacillus amyloliquefaciens subsp. plantarum).